Reading from the N-terminus, the 43-residue chain is Snaclec lebecetin subunit beta (43 aa).

A C-type lectin domain is found at Ala-1–Val-43. A disulfide bridge links Cys-4 with Cys-16.

As to quaternary structure, heterodimer of subunits alpha and beta; disulfide-linked. Ca(2+) serves as cofactor. In terms of processing, glycosylated. In terms of tissue distribution, expressed by the venom gland.

It localises to the secreted. In terms of biological role, binds to the platelet GPIb/IX/V receptor system and inhibits ristocetin-induced platelet aggregation in human platelet-rich plasma. Strongly inhibits platelet aggregation induced by ADP, calcium ionophore, thrombin and collagen. Does not inhibit U46619-induced platelet aggregation. The protein is Snaclec lebecetin subunit beta of Macrovipera lebetinus (Levantine viper).